Here is a 621-residue protein sequence, read N- to C-terminus: Putative zinc metalloprotease CPn_0344/CP_0416/CPj0344/CpB0350 (621 aa).

H20 provides a ligand contact to Zn(2+). The active site involves E21. A Zn(2+)-binding site is contributed by H24. A run of 3 helical transmembrane segments spans residues 103 to 125, 561 to 583, and 596 to 613; these read ILVL…SILY, VLNL…WEIV, and ILVP…FLTF.

It belongs to the peptidase M50B family. The cofactor is Zn(2+).

The protein localises to the cell inner membrane. This chain is Putative zinc metalloprotease CPn_0344/CP_0416/CPj0344/CpB0350, found in Chlamydia pneumoniae (Chlamydophila pneumoniae).